The following is a 522-amino-acid chain: Sorting nexin-1 (522 aa).

Disordered stretches follow at residues 1–84 and 115–142; these read MASG…QDQE and SLPP…QEDQ. Residues S32 and S39 each carry the phosphoserine modification. The segment covering 35-45 has biased composition (acidic residues); the sequence is EAGDSDTEGED. Residues T41 and T48 each carry the phosphothreonine modification. Residues 55–73 show a composition bias toward polar residues; that stretch reads KHQSPKITTSLLPINNGSK. Phosphoserine occurs at positions 58 and 72. Residues 132 to 142 show a composition bias toward acidic residues; sequence EELEEEEQEDQ. Residues 143–272 form the PX domain; that stretch reads FDLTVGITDP…EFLEKEELPR (130 aa). The a 1,2-diacyl-sn-glycero-3-phospho-(1D-myo-inositol-3-phosphate) site is built by R186, S188, and K214. At S188 the chain carries Phosphoserine. The residue at position 237 (K237) is an N6-acetyllysine. R238 lines the a 1,2-diacyl-sn-glycero-3-phospho-(1D-myo-inositol-3-phosphate) pocket. S280 is modified (phosphoserine). Residues 281–298 form a membrane-binding amphipathic helix region; it reads GAGLLKMFNKATDAVSKM. Residues 302 to 522 enclose the BAR domain; it reads MNESDIWFEE…AFLPEAKAIS (221 aa).

Belongs to the sorting nexin family. Predominantly forms heterodimers with BAR domain-containing sorting nexins SNX5, SNX6 and SNX32; can self-associate to form homodimers. The heterodimers are proposed to self-assemble into helical arrays on the membrane to stabilize and expand local membrane curvature underlying endosomal tubule formation. Thought to be a component of the originally described retromer complex (also called SNX-BAR retromer) which is a pentamer containing the heterotrimeric retromer cargo-selective complex (CSC), also described as vacuolar protein sorting subcomplex (VPS) and a heterodimeric membrane-deforming subcomplex formed between SNX1 or SNX2 and SNX5 or SNX6 (also called SNX-BAR subcomplex); the respective CSC and SNX-BAR subcomplexes associate with low affinity. Interacts with SNX5, SNX6, SNX32, VPS26A, VPS29, VPS35, DRD5, DENND5A, KALRN, RHOG (GDP-bound form). The interaction with SNX2 is reported controversially. Interacts with DNAJC13; prevented by presence of HGS. Interacts with HGS.

The protein resides in the endosome membrane. The protein localises to the golgi apparatus. Its subcellular location is the trans-Golgi network membrane. It is found in the early endosome membrane. It localises to the cell projection. The protein resides in the lamellipodium. Its function is as follows. Involved in several stages of intracellular trafficking. Interacts with membranes containing phosphatidylinositol 3-phosphate (PtdIns(3P)) or phosphatidylinositol 3,5-bisphosphate (PtdIns(3,5)P2). Acts in part as component of the retromer membrane-deforming SNX-BAR subcomplex. The SNX-BAR retromer mediates retrograde transport of cargo proteins from endosomes to the trans-Golgi network (TGN) and is involved in endosome-to-plasma membrane transport for cargo protein recycling. The SNX-BAR subcomplex functions to deform the donor membrane into a tubular profile called endosome-to-TGN transport carrier (ETC). Can sense membrane curvature and has in vitro vesicle-to-membrane remodeling activity. Involved in retrograde endosome-to-TGN transport of lysosomal enzyme receptors (IGF2R, M6PR and SORT1) and Shiginella dysenteria toxin stxB. Plays a role in targeting ligand-activated EGFR to the lysosomes for degradation after endocytosis from the cell surface and release from the Golgi. Involvement in retromer-independent endocytic trafficking of P2RY1 and lysosomal degradation of protease-activated receptor-1/F2R. Promotes KALRN- and RHOG-dependent but retromer-independent membrane remodeling such as lamellipodium formation; the function is dependent on GEF activity of KALRN. Required for endocytosis of DRD5 upon agonist stimulation but not for basal receptor trafficking. This chain is Sorting nexin-1 (SNX1), found in Homo sapiens (Human).